A 343-amino-acid polypeptide reads, in one-letter code: GTPase Obg (343 aa).

One can recognise an Obg domain in the interval 1–159 (MKYIDEVKIQ…FELKLELRVL (159 aa)). Residues 160–334 (ADVGLLGLPN…LTYAIMGYLE (175 aa)) enclose the OBG-type G domain. GTP is bound by residues 166–173 (GLPNAGKS), 191–195 (FTTLY), 213–216 (DIPG), 284–287 (NKVD), and 315–317 (SAL). 2 residues coordinate Mg(2+): Ser-173 and Thr-193.

This sequence belongs to the TRAFAC class OBG-HflX-like GTPase superfamily. OBG GTPase family. In terms of assembly, monomer. The cofactor is Mg(2+).

It localises to the cytoplasm. An essential GTPase which binds GTP, GDP and possibly (p)ppGpp with moderate affinity, with high nucleotide exchange rates and a fairly low GTP hydrolysis rate. Plays a role in control of the cell cycle, stress response, ribosome biogenesis and in those bacteria that undergo differentiation, in morphogenesis control. The chain is GTPase Obg from Nitrosomonas eutropha (strain DSM 101675 / C91 / Nm57).